The chain runs to 429 residues: Adenylosuccinate synthetase (429 aa).

GTP-binding positions include 12-18 (GDEGKGK) and 40-42 (GHT). Aspartate 13 serves as the catalytic Proton acceptor. Mg(2+) contacts are provided by aspartate 13 and glycine 40. Residues 13–16 (DEGK), 38–41 (NAGH), threonine 128, arginine 142, glutamine 223, threonine 238, and arginine 302 contribute to the IMP site. The Proton donor role is filled by histidine 41. 298-304 (TTTGRPR) is a binding site for substrate. Residues arginine 304, 330-332 (SID), and 412-414 (SVG) each bind GTP.

This sequence belongs to the adenylosuccinate synthetase family. As to quaternary structure, homodimer. Mg(2+) is required as a cofactor.

Its subcellular location is the cytoplasm. It catalyses the reaction IMP + L-aspartate + GTP = N(6)-(1,2-dicarboxyethyl)-AMP + GDP + phosphate + 2 H(+). Its pathway is purine metabolism; AMP biosynthesis via de novo pathway; AMP from IMP: step 1/2. Its function is as follows. Plays an important role in the de novo pathway of purine nucleotide biosynthesis. Catalyzes the first committed step in the biosynthesis of AMP from IMP. This is Adenylosuccinate synthetase from Exiguobacterium sp. (strain ATCC BAA-1283 / AT1b).